Reading from the N-terminus, the 465-residue chain is Ran-binding protein 3-like (465 aa).

The 142-residue stretch at 276–417 (SQPSRKCLLE…ALQSFNKQRD (142 aa)) folds into the RanBD1 domain.

As to quaternary structure, interacts with SMAD1, SMAD5 and SMAD8; the interaction (with SMAD at least) increases when SMAD1 is not phosphorylated and mediates SMAD1 nuclear export.

The protein localises to the nucleus. The protein resides in the cytoplasm. Nuclear export factor for BMP-specific SMAD1/5/8 that plays a critical role in terminating BMP signaling and regulating mesenchymal stem cell differentiation by blocking osteoblast differentiation to promote myogenic differention. Directly recognizes dephosphorylated SMAD1/5/8 and mediates their nuclear export in a Ran-dependent manner. In Homo sapiens (Human), this protein is Ran-binding protein 3-like (RANBP3L).